The following is a 262-amino-acid chain: 2-keto-4-pentenoate hydratase (262 aa).

It belongs to the hydratase/decarboxylase family. MhpD subfamily. Requires a divalent metal cation as cofactor.

The catalysed reaction is (S)-4-hydroxy-2-oxopentanoate = (2Z)-2-hydroxypenta-2,4-dienoate + H2O. The protein operates within aromatic compound metabolism; 3-phenylpropanoate degradation. In terms of biological role, catalyzes the conversion of 2-hydroxypentadienoic acid (enolic form of 2-oxopent-4-enoate) to 4-hydroxy-2-ketopentanoic acid. This Paraburkholderia phymatum (strain DSM 17167 / CIP 108236 / LMG 21445 / STM815) (Burkholderia phymatum) protein is 2-keto-4-pentenoate hydratase.